The chain runs to 285 residues: Ribosomal RNA small subunit methyltransferase H (285 aa).

S-adenosyl-L-methionine contacts are provided by residues 34-36 (AGH), aspartate 51, phenylalanine 75, aspartate 96, and histidine 103. The tract at residues 258 to 285 (PLVPSEKEAAQNPRARSAKLRAAEKEAP) is disordered.

The protein belongs to the methyltransferase superfamily. RsmH family.

The protein resides in the cytoplasm. It catalyses the reaction cytidine(1402) in 16S rRNA + S-adenosyl-L-methionine = N(4)-methylcytidine(1402) in 16S rRNA + S-adenosyl-L-homocysteine + H(+). Functionally, specifically methylates the N4 position of cytidine in position 1402 (C1402) of 16S rRNA. The sequence is that of Ribosomal RNA small subunit methyltransferase H from Thermus thermophilus (strain ATCC BAA-163 / DSM 7039 / HB27).